The chain runs to 255 residues: Small ribosomal subunit protein uS2 (255 aa).

The protein belongs to the universal ribosomal protein uS2 family.

The chain is Small ribosomal subunit protein uS2 (rpsB) from Streptococcus pyogenes serotype M1.